Reading from the N-terminus, the 121-residue chain is Small ribosomal subunit protein bS16 (121 aa).

Basic and acidic residues predominate over residues 97-114 (LAKAKTKDGDNDSSKAES). The segment at 97–121 (LAKAKTKDGDNDSSKAESESNEAET) is disordered.

This sequence belongs to the bacterial ribosomal protein bS16 family.

In Prochlorococcus marinus (strain MIT 9301), this protein is Small ribosomal subunit protein bS16.